We begin with the raw amino-acid sequence, 610 residues long: UvrABC system protein C (610 aa).

The 79-residue stretch at 16 to 94 (SQPGVYRMYD…IKLYQPRYNV (79 aa)) folds into the GIY-YIG domain. One can recognise a UVR domain in the interval 204–239 (DQVLTQLIARMEKASQDLAFEEAARIRDQIQAVRRV).

Belongs to the UvrC family. As to quaternary structure, interacts with UvrB in an incision complex.

The protein resides in the cytoplasm. Its function is as follows. The UvrABC repair system catalyzes the recognition and processing of DNA lesions. UvrC both incises the 5' and 3' sides of the lesion. The N-terminal half is responsible for the 3' incision and the C-terminal half is responsible for the 5' incision. This Salmonella paratyphi C (strain RKS4594) protein is UvrABC system protein C.